A 339-amino-acid polypeptide reads, in one-letter code: MSTHLRKLPGLLLCLLLALPAWYLGRLFPIIGAPVFAILLGMLLALFYGHRDKTKEGISFTSKCILQTAVVLLGFGLNLTQVMAVGMQSLPIIISTIATALLVAYGLQKWLRLDVNTATLVGVGSSICGGSAIAATAPVIKAKDDEVAKAISVIFLFNMLAALLFPSLGQLLGLSNEGFAIFAGTAVNDTSSVTATATAWDAIHHSNTLDGATIVKLTRTLAILPITLGLSLYRAKKEHDIVTEENFSLRKSFPRFILFFLLASLITTLMTSFGVSAEVFHSLKTLSKFFIVMAMAAIGLNTNLVKLIKTGGQAILLGAICWVAITLVSLAMQLSLGIW.

Transmembrane regions (helical) follow at residues 7-24, 28-50, 57-79, 84-106, 118-140, 150-172, 256-275, 290-307, and 314-336; these read KLPGLLLCLLLALPAWYL, FPIIGAPVFAILLGMLLALFYGH, GISFTSKCILQTAVVLLGFGLNL, AVGMQSLPIIISTIATALLVAYG, ATLVGVGSSICGGSAIAATAPVI, AISVIFLFNMLAALLFPSLGQLL, FILFFLLASLITTLMTSFGV, FIVMAMAAIGLNTNLVKL, and AILLGAICWVAITLVSLAMQLSL.

It belongs to the UPF0324 family.

It is found in the cell membrane. This is UPF0324 membrane protein spyM18_1033 from Streptococcus pyogenes serotype M18 (strain MGAS8232).